The primary structure comprises 185 residues: NAD(P)H-dependent FAD/FMN reductase GTNG_3158 (185 aa).

As to quaternary structure, anthranilate 3-monooxygenase consists of a reductase component (GTNG_3158) and an oxygenase component HpaH.

It catalyses the reaction FADH2 + NAD(+) = FAD + NADH + 2 H(+). The catalysed reaction is FADH2 + NADP(+) = FAD + NADPH + 2 H(+). Its function is as follows. Involved in the pathway of tryptophan degradation. Reduces FAD/FMN to FADH(2)/FMNH(2), which are subsequently used for the hydroxylation of anthranilate. It can reduce either FAD or flavin mononucleotide (FMN) but prefers FAD. The enzyme has a slight preference for NADPH as acceptor. The chain is NAD(P)H-dependent FAD/FMN reductase GTNG_3158 from Geobacillus thermodenitrificans (strain NG80-2).